The following is a 482-amino-acid chain: tRNA sulfurtransferase (482 aa).

The region spanning 58-160 is the THUMP domain; that stretch reads VEALQELSRV…GNKAYLYSNV (103 aa). ATP-binding positions include 178-179, 203-204, Arg-260, Gly-282, and Gln-291; these read LF and HY. The cysteines at positions 341 and 444 are disulfide-linked. Positions 400–482 constitute a Rhodanese domain; sequence IPGDSIIIDV…RYRAGLEKTR (83 aa). The Cysteine persulfide intermediate role is filled by Cys-444.

It belongs to the ThiI family.

The protein resides in the cytoplasm. It catalyses the reaction [ThiI sulfur-carrier protein]-S-sulfanyl-L-cysteine + a uridine in tRNA + 2 reduced [2Fe-2S]-[ferredoxin] + ATP + H(+) = [ThiI sulfur-carrier protein]-L-cysteine + a 4-thiouridine in tRNA + 2 oxidized [2Fe-2S]-[ferredoxin] + AMP + diphosphate. It carries out the reaction [ThiS sulfur-carrier protein]-C-terminal Gly-Gly-AMP + S-sulfanyl-L-cysteinyl-[cysteine desulfurase] + AH2 = [ThiS sulfur-carrier protein]-C-terminal-Gly-aminoethanethioate + L-cysteinyl-[cysteine desulfurase] + A + AMP + 2 H(+). Its pathway is cofactor biosynthesis; thiamine diphosphate biosynthesis. Functionally, catalyzes the ATP-dependent transfer of a sulfur to tRNA to produce 4-thiouridine in position 8 of tRNAs, which functions as a near-UV photosensor. Also catalyzes the transfer of sulfur to the sulfur carrier protein ThiS, forming ThiS-thiocarboxylate. This is a step in the synthesis of thiazole, in the thiamine biosynthesis pathway. The sulfur is donated as persulfide by IscS. The polypeptide is tRNA sulfurtransferase (Desulfurococcus amylolyticus (strain DSM 18924 / JCM 16383 / VKM B-2413 / 1221n) (Desulfurococcus kamchatkensis)).